The chain runs to 72 residues: NAD(P)H-quinone oxidoreductase subunit O (72 aa).

This sequence belongs to the complex I NdhO subunit family. NDH-1 can be composed of about 15 different subunits; different subcomplexes with different compositions have been identified which probably have different functions.

The protein resides in the cellular thylakoid membrane. The enzyme catalyses a plastoquinone + NADH + (n+1) H(+)(in) = a plastoquinol + NAD(+) + n H(+)(out). It catalyses the reaction a plastoquinone + NADPH + (n+1) H(+)(in) = a plastoquinol + NADP(+) + n H(+)(out). Its function is as follows. NDH-1 shuttles electrons from an unknown electron donor, via FMN and iron-sulfur (Fe-S) centers, to quinones in the respiratory and/or the photosynthetic chain. The immediate electron acceptor for the enzyme in this species is believed to be plastoquinone. Couples the redox reaction to proton translocation, and thus conserves the redox energy in a proton gradient. Cyanobacterial NDH-1 also plays a role in inorganic carbon-concentration. This is NAD(P)H-quinone oxidoreductase subunit O from Crocosphaera subtropica (strain ATCC 51142 / BH68) (Cyanothece sp. (strain ATCC 51142)).